The following is a 226-amino-acid chain: Deoxyribose-phosphate aldolase (226 aa).

Asp84 (proton donor/acceptor) is an active-site residue. Residue Lys146 is the Schiff-base intermediate with acetaldehyde of the active site. Catalysis depends on Lys188, which acts as the Proton donor/acceptor.

This sequence belongs to the DeoC/FbaB aldolase family. DeoC type 1 subfamily.

It localises to the cytoplasm. It carries out the reaction 2-deoxy-D-ribose 5-phosphate = D-glyceraldehyde 3-phosphate + acetaldehyde. Its pathway is carbohydrate degradation; 2-deoxy-D-ribose 1-phosphate degradation; D-glyceraldehyde 3-phosphate and acetaldehyde from 2-deoxy-alpha-D-ribose 1-phosphate: step 2/2. In terms of biological role, catalyzes a reversible aldol reaction between acetaldehyde and D-glyceraldehyde 3-phosphate to generate 2-deoxy-D-ribose 5-phosphate. The protein is Deoxyribose-phosphate aldolase of Pyrobaculum arsenaticum (strain DSM 13514 / JCM 11321 / PZ6).